We begin with the raw amino-acid sequence, 236 residues long: Large ribosomal subunit protein uL1 (236 aa).

Belongs to the universal ribosomal protein uL1 family. In terms of assembly, part of the 50S ribosomal subunit.

Functionally, binds directly to 23S rRNA. The L1 stalk is quite mobile in the ribosome, and is involved in E site tRNA release. In terms of biological role, protein L1 is also a translational repressor protein, it controls the translation of the L11 operon by binding to its mRNA. This chain is Large ribosomal subunit protein uL1, found in Acidobacterium capsulatum (strain ATCC 51196 / DSM 11244 / BCRC 80197 / JCM 7670 / NBRC 15755 / NCIMB 13165 / 161).